The primary structure comprises 332 residues: MDPRSEVLLRQAELFGGRVLLAGLPADDLLGQLAGATAWSWHAGEQQQLDKRFGGRCSFGVAPPQGVFDTAVLFLPKSRELTDYLLQTLAARLPGRPLYLVGEKRGGIERAAKQLGSFGRARKLDSARHCQLWQVEVEQAPAAPNLDALARHFTLQLADGPLEVVSLPGVFSHGRLDLGSALLLEHLDNLPGGRLLDFGCGAGILGATLKRRYPQSELVLLDVDAFAVESSRRTLAANGLEAEVIAGDGIDAAPRQLAAIISNPPFHQGVHTSYHASETLIERAAEHLQASGEMRIVANAFLRYPPLIERHLGTCQTLAERDGFRIYRAVRG.

This sequence belongs to the methyltransferase superfamily. RsmC family. As to quaternary structure, monomer.

The protein localises to the cytoplasm. The catalysed reaction is guanosine(1207) in 16S rRNA + S-adenosyl-L-methionine = N(2)-methylguanosine(1207) in 16S rRNA + S-adenosyl-L-homocysteine + H(+). In terms of biological role, specifically methylates the guanine in position 1207 of 16S rRNA in the 30S particle. In Stutzerimonas stutzeri (strain A1501) (Pseudomonas stutzeri), this protein is Ribosomal RNA small subunit methyltransferase C.